The chain runs to 261 residues: Glucose 1-dehydrogenase 4 (261 aa).

An NAD(+)-binding site is contributed by 11–35 (VITGGSTGLGRAMAVRFGQEEAKVV). S145 contributes to the substrate binding site. Catalysis depends on Y158, which acts as the Proton acceptor.

It belongs to the short-chain dehydrogenases/reductases (SDR) family. Homotetramer.

The catalysed reaction is D-glucose + NAD(+) = D-glucono-1,5-lactone + NADH + H(+). It carries out the reaction D-glucose + NADP(+) = D-glucono-1,5-lactone + NADPH + H(+). The polypeptide is Glucose 1-dehydrogenase 4 (gdhIV) (Priestia megaterium (Bacillus megaterium)).